The sequence spans 1155 residues: Alpha,alpha-trehalose-phosphate synthase [UDP-forming] 1 (1155 aa).

The disordered stretch occupies residues 56–94; sequence LQRRRSVSSRGGSLRGSMDSLNDSGQNGAEDVIGVEDEE. Low complexity predominate over residues 63–72; it reads SSRGGSLRGS.

This sequence in the N-terminal section; belongs to the glycosyltransferase 20 family. In the C-terminal section; belongs to the gob-1 trehalose phosphatase family.

It carries out the reaction D-glucose 6-phosphate + UDP-alpha-D-glucose = alpha,alpha-trehalose 6-phosphate + UDP + H(+). In terms of biological role, catalyzes the production of trehalose from glucose-6-phosphate and UDP-alpha-D-glucose in a 2 step process. In Aphelenchoides avenae (Mycophagous nematode worm), this protein is Alpha,alpha-trehalose-phosphate synthase [UDP-forming] 1 (tps-1).